A 1026-amino-acid chain; its full sequence is Isoleucine--tRNA ligase (1026 aa).

The 'HIGH' region signature appears at 51 to 61; that stretch reads PTANGRPHIGH. The short motif at 591 to 595 is the 'KMSKS' region element; that stretch reads KMSKS. Lys-594 lines the ATP pocket.

Belongs to the class-I aminoacyl-tRNA synthetase family. IleS type 2 subfamily. Monomer. Zn(2+) is required as a cofactor.

Its subcellular location is the cytoplasm. It carries out the reaction tRNA(Ile) + L-isoleucine + ATP = L-isoleucyl-tRNA(Ile) + AMP + diphosphate. Catalyzes the attachment of isoleucine to tRNA(Ile). As IleRS can inadvertently accommodate and process structurally similar amino acids such as valine, to avoid such errors it has two additional distinct tRNA(Ile)-dependent editing activities. One activity is designated as 'pretransfer' editing and involves the hydrolysis of activated Val-AMP. The other activity is designated 'posttransfer' editing and involves deacylation of mischarged Val-tRNA(Ile). In Thermoplasma acidophilum (strain ATCC 25905 / DSM 1728 / JCM 9062 / NBRC 15155 / AMRC-C165), this protein is Isoleucine--tRNA ligase.